The chain runs to 143 residues: MTNDKEKRLKELNRMQYEVTQNNGTEPPFQNEFWDHKEEGIYVDIISGKPLFSSLDKFDAHCGWPSFTKPLEDEEVAEKVDKSHGMVRTEVRSKTADSHLGHVFPDGPGPNGLRYCINSAALKFIPKDDLEKEGYGDLKHLFD.

The MsrB domain maps to 5–127; sequence KEKRLKELNR…NSAALKFIPK (123 aa). Cysteine 116 acts as the Nucleophile in catalysis.

It belongs to the MsrB Met sulfoxide reductase family.

It carries out the reaction L-methionyl-[protein] + [thioredoxin]-disulfide + H2O = L-methionyl-(R)-S-oxide-[protein] + [thioredoxin]-dithiol. The polypeptide is Peptide methionine sulfoxide reductase MsrB (Bacillus pumilus (strain SAFR-032)).